Here is a 485-residue protein sequence, read N- to C-terminus: tRNA-2-methylthio-N(6)-dimethylallyladenosine synthase (485 aa).

One can recognise an MTTase N-terminal domain in the interval 37-154 (GKLYIKTHGC…LPELIRARRE (118 aa)). Residues Cys-46, Cys-83, Cys-117, Cys-191, Cys-195, and Cys-198 each contribute to the [4Fe-4S] cluster site. Residues 177–416 (RADGPSAFVS…HINAHAAGIS (240 aa)) enclose the Radical SAM core domain. The TRAM domain occupies 417–480 (QRMVGSVQRV…SNSLRGRIQL (64 aa)).

Belongs to the methylthiotransferase family. MiaB subfamily. In terms of assembly, monomer. The cofactor is [4Fe-4S] cluster.

The protein resides in the cytoplasm. It carries out the reaction N(6)-dimethylallyladenosine(37) in tRNA + (sulfur carrier)-SH + AH2 + 2 S-adenosyl-L-methionine = 2-methylsulfanyl-N(6)-dimethylallyladenosine(37) in tRNA + (sulfur carrier)-H + 5'-deoxyadenosine + L-methionine + A + S-adenosyl-L-homocysteine + 2 H(+). Functionally, catalyzes the methylthiolation of N6-(dimethylallyl)adenosine (i(6)A), leading to the formation of 2-methylthio-N6-(dimethylallyl)adenosine (ms(2)i(6)A) at position 37 in tRNAs that read codons beginning with uridine. The chain is tRNA-2-methylthio-N(6)-dimethylallyladenosine synthase from Xanthomonas campestris pv. campestris (strain 8004).